Here is a 248-residue protein sequence, read N- to C-terminus: MSFVVIIPARFSSTRLPGKPLLDINGKPMIVHVLERARESGAERIIVATDHEDVARAVEAAGGEVCMTRADHQSGTERLAEVVEKCGFSDDTVIVNVQGDEPMIPAVIIRQVAENLAQRQVGMATLAAPIHGAEEAFNPNAVKVVLDAEGYALYFSRATIPWDRDRFAKSLETVGDTFLRHLGIYGYRAGFIRRYVNWQPSPLEHIEMLEQLRVLWYGEKIHVAVAKEVPGTGVDTAEDLERVRAEMR.

It belongs to the KdsB family.

The protein resides in the cytoplasm. It carries out the reaction 3-deoxy-alpha-D-manno-oct-2-ulosonate + CTP = CMP-3-deoxy-beta-D-manno-octulosonate + diphosphate. Its pathway is nucleotide-sugar biosynthesis; CMP-3-deoxy-D-manno-octulosonate biosynthesis; CMP-3-deoxy-D-manno-octulosonate from 3-deoxy-D-manno-octulosonate and CTP: step 1/1. It participates in bacterial outer membrane biogenesis; lipopolysaccharide biosynthesis. Functionally, activates KDO (a required 8-carbon sugar) for incorporation into bacterial lipopolysaccharide in Gram-negative bacteria. This chain is 3-deoxy-manno-octulosonate cytidylyltransferase, found in Citrobacter koseri (strain ATCC BAA-895 / CDC 4225-83 / SGSC4696).